A 395-amino-acid chain; its full sequence is Elongation factor Tu (395 aa).

The region spanning Lys10–Glu205 is the tr-type G domain. The tract at residues Gly19 to Thr26 is G1. Gly19 to Thr26 contacts GTP. Thr26 provides a ligand contact to Mg(2+). Residues Gly61 to Ala65 are G2. Residues Asp82 to Gly85 form a G3 region. GTP contacts are provided by residues Asp82 to His86 and Asn137 to Asp140. Residues Asn137–Asp140 are G4. Positions Ser175–Leu177 are G5.

Belongs to the TRAFAC class translation factor GTPase superfamily. Classic translation factor GTPase family. EF-Tu/EF-1A subfamily. In terms of assembly, monomer.

It localises to the cytoplasm. It catalyses the reaction GTP + H2O = GDP + phosphate + H(+). Its function is as follows. GTP hydrolase that promotes the GTP-dependent binding of aminoacyl-tRNA to the A-site of ribosomes during protein biosynthesis. This chain is Elongation factor Tu, found in Solibacter usitatus (strain Ellin6076).